Consider the following 1361-residue polypeptide: Zinc finger protein GLI4 (1361 aa).

Residues 185 to 270 (SSFGHTPLLH…PQPPDHLTDL (86 aa)) are disordered. Polar residues-rich tracts occupy residues 198–208 (TFASRQQGALT) and 227–241 (NKVS…TVNQ). C2H2-type zinc fingers lie at residues 289–314 (TNCH…NNDH), 322–349 (FVCR…MRRH), 355–379 (HKCT…LRSH), 385–410 (YVCD…NRTH), and 416–441 (YICK…KTVH). Disordered stretches follow at residues 434–527 (RKHV…TNNI), 556–584 (STVS…GTAE), 647–720 (NERR…LPNL), 787–832 (NAGL…SMNS), 906–946 (QNRE…APGA), and 1134–1230 (DGLH…PKDN). The segment covering 475 to 502 (SGREHSDSVSRDQEHCLQTRTIKTEDNM) has biased composition (basic and acidic residues). Residues 506–522 (SSPGGQSSCSSEPSPYG) are compositionally biased toward low complexity. Basic and acidic residues predominate over residues 573-584 (QRIHSAETGTAE). Over residues 653–670 (TSSTLSSAYTSRRSSGIS) the composition is skewed to low complexity. Polar residues-rich tracts occupy residues 672-695 (YFSS…SSAD) and 710-720 (EASQHSGLPNL). Basic and acidic residues predominate over residues 805 to 821 (RASDPVRRTAGIDDKPL). Polar residues-rich tracts occupy residues 913–939 (QNLQ…NTPE) and 1142–1164 (YTVQ…SGQA). Over residues 1172-1183 (PRPPAAPHPPNR) the composition is skewed to pro residues.

The protein belongs to the GLI C2H2-type zinc-finger protein family.

Its subcellular location is the nucleus. Functionally, has an essential role in the early embryonic patterning of mesoderm and neuroectoderm. The protein is Zinc finger protein GLI4 (gli4) of Xenopus laevis (African clawed frog).